The following is a 470-amino-acid chain: Amino-acid permease RocC (470 aa).

12 helical membrane-spanning segments follow: residues 18–38, 44–64, 90–110, 119–139, 159–179, 196–216, 243–263, 281–301, 338–358, 360–380, 409–429, and 433–453; these read FMIA…GFTI, LGAI…MLCL, GFMI…LELT, WLPS…IFLI, VAAI…LIDF, GLFP…NFSF, VIWR…AILP, IGIP…ILSV, ALLI…MAAE, VYLW…MSIC, LVPI…IFIP, and IGLY…HLSI.

This sequence belongs to the amino acid-polyamine-organocation (APC) superfamily.

The protein resides in the cell membrane. Its function is as follows. Putative transport protein involved in arginine degradative pathway. Probably transports arginine or ornithine. In Bacillus subtilis (strain 168), this protein is Amino-acid permease RocC (rocC).